A 318-amino-acid polypeptide reads, in one-letter code: Aspartate carbamoyltransferase catalytic subunit (318 aa).

R59 and T60 together coordinate carbamoyl phosphate. K87 contributes to the L-aspartate binding site. The carbamoyl phosphate site is built by R109, H137, and Q140. 2 residues coordinate L-aspartate: R170 and R224. Residues G265 and P266 each coordinate carbamoyl phosphate.

Belongs to the aspartate/ornithine carbamoyltransferase superfamily. ATCase family. Heterododecamer (2C3:3R2) of six catalytic PyrB chains organized as two trimers (C3), and six regulatory PyrI chains organized as three dimers (R2).

The enzyme catalyses carbamoyl phosphate + L-aspartate = N-carbamoyl-L-aspartate + phosphate + H(+). The protein operates within pyrimidine metabolism; UMP biosynthesis via de novo pathway; (S)-dihydroorotate from bicarbonate: step 2/3. In terms of biological role, catalyzes the condensation of carbamoyl phosphate and aspartate to form carbamoyl aspartate and inorganic phosphate, the committed step in the de novo pyrimidine nucleotide biosynthesis pathway. This is Aspartate carbamoyltransferase catalytic subunit from Rhizobium johnstonii (strain DSM 114642 / LMG 32736 / 3841) (Rhizobium leguminosarum bv. viciae).